A 157-amino-acid chain; its full sequence is Small ribosomal subunit protein uS7 (157 aa).

The protein belongs to the universal ribosomal protein uS7 family. Part of the 30S ribosomal subunit. Contacts proteins S9 and S11.

One of the primary rRNA binding proteins, it binds directly to 16S rRNA where it nucleates assembly of the head domain of the 30S subunit. Is located at the subunit interface close to the decoding center, probably blocks exit of the E-site tRNA. This chain is Small ribosomal subunit protein uS7, found in Chlamydia trachomatis serovar L2 (strain ATCC VR-902B / DSM 19102 / 434/Bu).